Consider the following 666-residue polypeptide: Endogenous retrovirus group K member 7 Gag polyprotein (666 aa).

Glycine 2 carries the N-myristoyl glycine lipid modification. Disordered regions lie at residues 165-205 (GKGP…NKTQ) and 217-264 (ELQY…GSEL). Over residues 232 to 247 (GMPPAPQGRAPYPQPP) the composition is skewed to pro residues. CCHC-type zinc fingers lie at residues 544–561 (GKCYNCGQIGHLKKNCPV) and 580–597 (DLCPRCKKGKHWASQCRS). The interval 598 to 641 (KFDKNGQPLSGNEQRGQPQAPQQTGAFPIQPFVPQGFQEQQPPL) is disordered. The segment covering 604–622 (QPLSGNEQRGQPQAPQQTG) has biased composition (polar residues).

This sequence belongs to the beta type-B retroviral Gag protein family. HERV class-II K(HML-2) gag subfamily. Post-translationally, specific enzymatic cleavages may yield mature proteins. Myristoylation is essential for retroviral assembly. Alteration of the glycine residue leads to a block in the budding of particles and an accumulation of Gag inside the cell.

It is found in the cell membrane. The products of the Gag polyproteins of infectious retroviruses perform highly complex orchestrated tasks during the assembly, budding, maturation, and infection stages of the viral replication cycle. During viral assembly, the proteins form membrane associations and self-associations that ultimately result in budding of an immature virion from the infected cell. Gag precursors also function during viral assembly to selectively bind and package two plus strands of genomic RNA. Endogenous Gag proteins may have kept, lost or modified their original function during evolution. This chain is Endogenous retrovirus group K member 7 Gag polyprotein (ERVK-7), found in Homo sapiens (Human).